The chain runs to 591 residues: Aspartate--tRNA ligase (591 aa).

E173 lines the L-aspartate pocket. The tract at residues 197–200 (QLFK) is aspartate. L-aspartate is bound at residue R219. ATP-binding positions include 219–221 (RDE) and Q228. Residue H448 coordinates L-aspartate. E482 provides a ligand contact to ATP. R489 is an L-aspartate binding site. Residue 534 to 537 (GLDR) coordinates ATP.

It belongs to the class-II aminoacyl-tRNA synthetase family. Type 1 subfamily. In terms of assembly, homodimer.

Its subcellular location is the cytoplasm. The enzyme catalyses tRNA(Asp) + L-aspartate + ATP = L-aspartyl-tRNA(Asp) + AMP + diphosphate. Catalyzes the attachment of L-aspartate to tRNA(Asp) in a two-step reaction: L-aspartate is first activated by ATP to form Asp-AMP and then transferred to the acceptor end of tRNA(Asp). This Shewanella amazonensis (strain ATCC BAA-1098 / SB2B) protein is Aspartate--tRNA ligase.